A 138-amino-acid polypeptide reads, in one-letter code: Acidic phospholipase A2 Ts-A1 (138 aa).

The N-terminal stretch at 1–16 is a signal peptide; that stretch reads MRTLWIMAVLQVGVEG. Cystine bridges form between cysteine 42–cysteine 131, cysteine 44–cysteine 60, cysteine 59–cysteine 111, cysteine 65–cysteine 138, cysteine 66–cysteine 104, cysteine 73–cysteine 97, and cysteine 91–cysteine 102. The Ca(2+) site is built by phenylalanine 43, glycine 45, and glycine 47. Histidine 63 is a catalytic residue. Aspartate 64 is a Ca(2+) binding site. Residue aspartate 105 is part of the active site.

The cofactor is Ca(2+). Expressed by the venom gland.

The protein resides in the secreted. It catalyses the reaction a 1,2-diacyl-sn-glycero-3-phosphocholine + H2O = a 1-acyl-sn-glycero-3-phosphocholine + a fatty acid + H(+). In terms of biological role, snake venom phospholipase A2 (PLA2) that shows a moderate inhibition of ADP-induced human platelet aggregation when tested on platelet rich plasma. Exhibits high hydrolytic activities and prefers the anionic micelles (dPPC with deoxycholate) to the zwitterionic micelles (dPPC with Triton X-100). PLA2 catalyzes the calcium-dependent hydrolysis of the 2-acyl groups in 3-sn-phosphoglycerides. In Trimeresurus stejnegeri (Chinese green tree viper), this protein is Acidic phospholipase A2 Ts-A1.